We begin with the raw amino-acid sequence, 507 residues long: Heat shock 70 kDa protein 14-B (507 aa).

Belongs to the heat shock protein 70 family. In terms of assembly, component of ribosome-associated complex (RAC).

Its subcellular location is the cytoplasm. It is found in the cytosol. In terms of biological role, component of the ribosome-associated complex (RAC), a complex involved in folding or maintaining nascent polypeptides in a folding-competent state. The protein is Heat shock 70 kDa protein 14-B (hspa14-b) of Xenopus laevis (African clawed frog).